Reading from the N-terminus, the 349-residue chain is Glycerol-3-phosphate dehydrogenase [NAD(+)], cytoplasmic (349 aa).

Residue 10 to 15 participates in NAD(+) binding; the sequence is GSGNWG. Position 120 (Lys-120) interacts with substrate. Ala-153 serves as a coordination point for NAD(+). Ser-154 is subject to Phosphoserine. Lys-204 (proton acceptor) is an active-site residue. Arg-269 is an NAD(+) binding site. 269–270 serves as a coordination point for substrate; the sequence is RN. The residue at position 289 (Lys-289) is an N6-succinyllysine. Positions 296 and 298 each coordinate NAD(+). Tyr-326 bears the Phosphotyrosine mark.

It belongs to the NAD-dependent glycerol-3-phosphate dehydrogenase family. As to quaternary structure, homodimer.

It localises to the cytoplasm. The catalysed reaction is sn-glycerol 3-phosphate + NAD(+) = dihydroxyacetone phosphate + NADH + H(+). In terms of biological role, has glycerol-3-phosphate dehydrogenase activity. This Mus musculus (Mouse) protein is Glycerol-3-phosphate dehydrogenase [NAD(+)], cytoplasmic.